An 86-amino-acid chain; its full sequence is Gas vesicle protein A1 (86 aa).

Belongs to the gas vesicle GvpA family. As to quaternary structure, the gas vesicle shell is 2 nm thick and consists of a single layer of this protein. It forms helical ribs nearly perpendicular to the long axis of the vesicle.

Its subcellular location is the gas vesicle shell. Gas vesicles are hollow, gas filled proteinaceous nanostructures found in some microorganisms. During planktonic growth they allow positioning of the organism at a favorable depth for light or nutrient acquisition. GvpA forms the protein shell. Functionally, it is not clear if the 2 type A proteins in this organism are functionally redundant. In terms of biological role, when the full gvp locus (gvpA1-gvpP-gvpQ-gvpA2-gvpR-gvpN-gvpF-gvpG-gvpL-gvpS-gvpK-gvpJ-gvpT-gvpU, called pNL26) is expressed in E.coli gas vesicles are made. This Priestia megaterium (Bacillus megaterium) protein is Gas vesicle protein A1.